A 107-amino-acid chain; its full sequence is Thiosulfate sulfurtransferase GlpE (107 aa).

Positions 17 to 101 (AAGAARLVDI…GFEAWRREFP (85 aa)) constitute a Rhodanese domain. The active-site Cysteine persulfide intermediate is the cysteine 65.

This sequence belongs to the GlpE family.

The protein resides in the cytoplasm. The enzyme catalyses thiosulfate + hydrogen cyanide = thiocyanate + sulfite + 2 H(+). It catalyses the reaction thiosulfate + [thioredoxin]-dithiol = [thioredoxin]-disulfide + hydrogen sulfide + sulfite + 2 H(+). Functionally, transferase that catalyzes the transfer of sulfur from thiosulfate to thiophilic acceptors such as cyanide or dithiols. May function in a CysM-independent thiosulfate assimilation pathway by catalyzing the conversion of thiosulfate to sulfite, which can then be used for L-cysteine biosynthesis. In Aeromonas hydrophila subsp. hydrophila (strain ATCC 7966 / DSM 30187 / BCRC 13018 / CCUG 14551 / JCM 1027 / KCTC 2358 / NCIMB 9240 / NCTC 8049), this protein is Thiosulfate sulfurtransferase GlpE.